We begin with the raw amino-acid sequence, 339 residues long: tRNA N6-adenosine threonylcarbamoyltransferase (339 aa).

The Fe cation site is built by His111 and His115. Substrate-binding positions include 134 to 138, Asp167, Gly180, and Asn279; that span reads VVSGG. Fe cation is bound at residue Asp307.

It belongs to the KAE1 / TsaD family. The cofactor is Fe(2+).

The protein localises to the cytoplasm. The enzyme catalyses L-threonylcarbamoyladenylate + adenosine(37) in tRNA = N(6)-L-threonylcarbamoyladenosine(37) in tRNA + AMP + H(+). Its function is as follows. Required for the formation of a threonylcarbamoyl group on adenosine at position 37 (t(6)A37) in tRNAs that read codons beginning with adenine. Is involved in the transfer of the threonylcarbamoyl moiety of threonylcarbamoyl-AMP (TC-AMP) to the N6 group of A37, together with TsaE and TsaB. TsaD likely plays a direct catalytic role in this reaction. This chain is tRNA N6-adenosine threonylcarbamoyltransferase, found in Syntrophobacter fumaroxidans (strain DSM 10017 / MPOB).